The primary structure comprises 294 residues: Probable endonuclease 4 (294 aa).

Zn(2+) contacts are provided by His-78, His-118, Glu-157, Asp-191, His-194, His-228, Asp-241, His-243, and Glu-273.

The protein belongs to the AP endonuclease 2 family. Zn(2+) serves as cofactor.

The enzyme catalyses Endonucleolytic cleavage to 5'-phosphooligonucleotide end-products.. In terms of biological role, endonuclease IV plays a role in DNA repair. It cleaves phosphodiester bonds at apurinic or apyrimidinic (AP) sites, generating a 3'-hydroxyl group and a 5'-terminal sugar phosphate. This is Probable endonuclease 4 from Streptomyces coelicolor (strain ATCC BAA-471 / A3(2) / M145).